The primary structure comprises 377 residues: DNA-directed RNA polymerase subunit alpha (377 aa).

Residues 1 to 259 form an alpha N-terminal domain (alpha-NTD) region; the sequence is MSDSSHNLLY…KHFSVFEKMD (259 aa). Residues 276-377 form an alpha C-terminal domain (alpha-CTD) region; that stretch reads KDDILHKLVL…KIRLSKNTKG (102 aa).

Belongs to the RNA polymerase alpha chain family. In terms of assembly, homodimer. The RNAP catalytic core consists of 2 alpha, 1 beta, 1 beta' and 1 omega subunit. When a sigma factor is associated with the core the holoenzyme is formed, which can initiate transcription.

The catalysed reaction is RNA(n) + a ribonucleoside 5'-triphosphate = RNA(n+1) + diphosphate. DNA-dependent RNA polymerase catalyzes the transcription of DNA into RNA using the four ribonucleoside triphosphates as substrates. The polypeptide is DNA-directed RNA polymerase subunit alpha (Chlamydia trachomatis serovar A (strain ATCC VR-571B / DSM 19440 / HAR-13)).